A 502-amino-acid chain; its full sequence is Lysine--tRNA ligase (502 aa).

Residues E413 and E420 each coordinate Mg(2+).

Belongs to the class-II aminoacyl-tRNA synthetase family. Homodimer. Requires Mg(2+) as cofactor.

Its subcellular location is the cytoplasm. It carries out the reaction tRNA(Lys) + L-lysine + ATP = L-lysyl-tRNA(Lys) + AMP + diphosphate. In Haemophilus influenzae (strain ATCC 51907 / DSM 11121 / KW20 / Rd), this protein is Lysine--tRNA ligase (lysS).